A 500-amino-acid polypeptide reads, in one-letter code: NAD(P)H-quinone oxidoreductase chain 4, chloroplastic (500 aa).

The next 14 helical transmembrane spans lie at 4–24 (FPWL…IFFL), 35–55 (YTIC…CYHF), 87–107 (IGPI…AWPV), 113–130 (LFHF…GLFS), 134–154 (LLLF…LLAM), 167–187 (FILY…GVAL), 208–228 (VLEI…SPII), 242–262 (HYST…YGLI), 272–292 (AHSI…IYAA), 305–325 (IAYS…SLTD), 330–350 (GALL…FLAG), 386–406 (LALP…GIIT), 416–436 (LLIT…SLSM), and 462–482 (LFLS…PDFV).

The protein belongs to the complex I subunit 4 family.

The protein localises to the plastid. Its subcellular location is the chloroplast thylakoid membrane. It carries out the reaction a plastoquinone + NADH + (n+1) H(+)(in) = a plastoquinol + NAD(+) + n H(+)(out). The enzyme catalyses a plastoquinone + NADPH + (n+1) H(+)(in) = a plastoquinol + NADP(+) + n H(+)(out). This is NAD(P)H-quinone oxidoreductase chain 4, chloroplastic from Solanum lycopersicum (Tomato).